A 233-amino-acid chain; its full sequence is Forkhead box protein L3 (233 aa).

Positions 32–130 (RPAYSYIALI…ENGNYRRRRR (99 aa)) form a DNA-binding region, fork-head. Basic residues predominate over residues 125 to 134 (YRRRRRRRGP). Positions 125–198 (YRRRRRRRGP…PRDLKFSIDY (74 aa)) are disordered. The segment covering 175–184 (REPPASPAPP) has biased composition (pro residues). Positions 185–194 (GKEHPRDLKF) are enriched in basic and acidic residues.

The protein localises to the nucleus. Its function is as follows. Probable transcriptional regulator. The chain is Forkhead box protein L3 from Homo sapiens (Human).